Here is a 195-residue protein sequence, read N- to C-terminus: Glutathione S-transferase class-mu 26 kDa isozyme (195 aa).

Positions 1 to 83 (MAPKLGYWKI…YIADKHNMLG (83 aa)) constitute a GST N-terminal domain. Glutathione contacts are provided by residues 7 to 8 (YW), 41 to 45 (WRNEK), 54 to 55 (NL), and 67 to 68 (QS). Residues 85–195 (CPKERAEISM…TFGGGDAPPK (111 aa)) enclose the GST C-terminal domain. Tyrosine 111 is a binding site for substrate.

Belongs to the GST superfamily. Mu family. As to quaternary structure, homodimer.

It catalyses the reaction RX + glutathione = an S-substituted glutathione + a halide anion + H(+). Functionally, conjugation of reduced glutathione to a wide number of exogenous and endogenous hydrophobic electrophiles. In terms of biological role, GST isoenzymes appear to play a central role in the parasite detoxification system. Other functions are also suspected including a role in increasing the solubility of haematin in the parasite gut. This Schistosoma mansoni (Blood fluke) protein is Glutathione S-transferase class-mu 26 kDa isozyme.